The primary structure comprises 290 residues: UPF0761 membrane protein YihY (290 aa).

A run of 6 helical transmembrane segments spans residues 44-64 (LLSLVPLVAVVFALFAAFPMF), 104-124 (VGACGLIVTALLLMYSIDSAL), 140-160 (FAVYWMILTLGPLLAGASLAI), 183-203 (IFPLLLSWISFWLLYSIVPTI), 210-230 (AIVGAFVAALLFEAGKKGFAL), and 244-264 (VLAVIPILFVWVYWTWCIVLL).

Belongs to the UPF0761 family.

It localises to the cell inner membrane. The chain is UPF0761 membrane protein YihY from Escherichia coli O139:H28 (strain E24377A / ETEC).